Consider the following 128-residue polypeptide: MQRHMLKSKIHRAAVTHCELHYEGSCAIDEDLLEAAGLIENERIDIWNINNGERFSTYAIKGERGSGMISLNGSAARRAQLGDLVIIAAFAMVDEAELQAGWKPKLVFIDEGNKIKGHRDHVPTQSWT.

Serine 25 acts as the Schiff-base intermediate with substrate; via pyruvic acid in catalysis. A Pyruvic acid (Ser) modification is found at serine 25. Threonine 57 provides a ligand contact to substrate. Tyrosine 58 functions as the Proton donor in the catalytic mechanism. A substrate-binding site is contributed by 73–75 (GSA).

It belongs to the PanD family. As to quaternary structure, heterooctamer of four alpha and four beta subunits. Requires pyruvate as cofactor. In terms of processing, is synthesized initially as an inactive proenzyme, which is activated by self-cleavage at a specific serine bond to produce a beta-subunit with a hydroxyl group at its C-terminus and an alpha-subunit with a pyruvoyl group at its N-terminus.

It localises to the cytoplasm. The catalysed reaction is L-aspartate + H(+) = beta-alanine + CO2. It participates in cofactor biosynthesis; (R)-pantothenate biosynthesis; beta-alanine from L-aspartate: step 1/1. Its function is as follows. Catalyzes the pyruvoyl-dependent decarboxylation of aspartate to produce beta-alanine. The chain is Aspartate 1-decarboxylase from Burkholderia vietnamiensis (strain G4 / LMG 22486) (Burkholderia cepacia (strain R1808)).